The sequence spans 183 residues: Threonylcarbamoyl-AMP synthase (183 aa).

The YrdC-like domain maps to 1–183; that stretch reads MELAQIVERL…IFSRQIFRRG (183 aa).

This sequence belongs to the SUA5 family. TsaC subfamily.

The protein localises to the cytoplasm. The enzyme catalyses L-threonine + hydrogencarbonate + ATP = L-threonylcarbamoyladenylate + diphosphate + H2O. Functionally, required for the formation of a threonylcarbamoyl group on adenosine at position 37 (t(6)A37) in tRNAs that read codons beginning with adenine. Catalyzes the conversion of L-threonine, HCO(3)(-)/CO(2) and ATP to give threonylcarbamoyl-AMP (TC-AMP) as the acyladenylate intermediate, with the release of diphosphate. This chain is Threonylcarbamoyl-AMP synthase, found in Mannheimia succiniciproducens (strain KCTC 0769BP / MBEL55E).